A 370-amino-acid chain; its full sequence is DNA replication and repair protein RecF (370 aa).

30 to 37 (GENAQGKT) serves as a coordination point for ATP.

The protein belongs to the RecF family.

The protein resides in the cytoplasm. Functionally, the RecF protein is involved in DNA metabolism; it is required for DNA replication and normal SOS inducibility. RecF binds preferentially to single-stranded, linear DNA. It also seems to bind ATP. The chain is DNA replication and repair protein RecF from Listeria welshimeri serovar 6b (strain ATCC 35897 / DSM 20650 / CCUG 15529 / CIP 8149 / NCTC 11857 / SLCC 5334 / V8).